Here is a 128-residue protein sequence, read N- to C-terminus: Large ribosomal subunit protein bL19 (128 aa).

The protein belongs to the bacterial ribosomal protein bL19 family.

In terms of biological role, this protein is located at the 30S-50S ribosomal subunit interface and may play a role in the structure and function of the aminoacyl-tRNA binding site. The chain is Large ribosomal subunit protein bL19 from Verminephrobacter eiseniae (strain EF01-2).